We begin with the raw amino-acid sequence, 360 residues long: Protein Wnt-2 (360 aa).

Positions Met1–Ser25 are cleaved as a signal peptide. Disulfide bonds link Cys76–Cys87, Cys127–Cys135, Cys137–Cys157, Cys206–Cys220, Cys208–Cys215, Cys278–Cys309, Cys294–Cys304, Cys308–Cys348, Cys324–Cys339, Cys326–Cys336, and Cys331–Cys332. Ser212 carries O-palmitoleoyl serine; by PORCN lipidation. A glycan (N-linked (GlcNAc...) asparagine) is linked at Asn295.

The protein belongs to the Wnt family. Palmitoleoylation is required for efficient binding to frizzled receptors. Depalmitoleoylation leads to Wnt signaling pathway inhibition.

Its subcellular location is the secreted. It is found in the extracellular space. The protein resides in the extracellular matrix. Functionally, ligand for members of the frizzled family of seven transmembrane receptors. Probable developmental protein. May be a signaling molecule which affects the development of discrete regions of tissues. Is likely to signal over only few cell diameters. The chain is Protein Wnt-2 (WNT2) from Oryctolagus cuniculus (Rabbit).